A 720-amino-acid chain; its full sequence is MASGNRKVTIQLVDDGAGTGAGGPQLFKGQNYEAIRRACLDSGILFRDPCFPAGPDALGYDKLGPDSEKAKGVEWKRPHEFCAEPQFICEDMSRTDVCQGSLGNCWLLAAAASLTLYPRLLYRVVPPGQGFQDGYAGVFHFQLWQFGRWVDVVVDDKLPVREGKLMFVRSEQRNEFWAPLLEKAYAKLHGSYEVMRGGHMNEAFVDFTGGVGEVLYLRQNTPGVFAALRHALAKESLVGATALSDRGEIRTDEGLVKGHAYSVTGTHKMSLGFTKVRLLRLRNPWGRVEWSGPWSDSCPRWDMLPSEWRDALLVKKEDGEFWMELQDFLTHFNTVQICSLSPEVLGPSPAGGGWHIHIFQGRWVRGFNSGGSQPSAENFWTNPQFRLTLLEPDEEEDDDDEEGPWGGWGAAGARGPARGGRVPKCTVLLSLIQRNRRCLRAKGLTYLTVGFHVFQIPEELLDLWDSPRSRALLPGLLRADRSVFCARRDVSRRCRLPPGHYLVVPSASRVGDEADFTLRIFSERSHTAVEIDDVISADLDALQAPYKPLELELAQLFLELAGEEEELNALQLQTLISIALEPARANTRTPGEIGLRTCEQLVQCFGRGQRLSLHHFQELWGHLMSWQATFDKFDEDASGTMNSCELRLALTAAGFHLNNQLTQSLTSRYRDSRLRVDFERFVGCAARLTCIFRHCCQHLDGGEGVVCLTHKQWSEVATFS.

The Calpain catalytic domain maps to 45–341; that stretch reads LFRDPCFPAG…FNTVQICSLS (297 aa). Catalysis depends on residues cysteine 105, histidine 259, and asparagine 283. The domain III stretch occupies residues 342–541; it reads PEVLGPSPAG…DDVISADLDA (200 aa). Positions 393–403 are enriched in acidic residues; that stretch reads DEEEDDDDEEG. The disordered stretch occupies residues 393–415; sequence DEEEDDDDEEGPWGGWGAAGARG. Residues 542–720 are domain IV; sequence LQAPYKPLEL…KQWSEVATFS (179 aa). In terms of domain architecture, EF-hand spans 621-656; it reads GHLMSWQATFDKFDEDASGTMNSCELRLALTAAGFH. Aspartate 634, aspartate 636, serine 638, threonine 640, and glutamate 645 together coordinate Ca(2+).

This sequence belongs to the peptidase C2 family. In terms of tissue distribution, expression localized to the cortex of the hair follicle during the anagen phase of hair cycle.

Its function is as follows. Calcium-regulated non-lysosomal thiol-protease. The protein is Calpain-12 (Capn12) of Mus musculus (Mouse).